The following is a 526-amino-acid chain: METIFNRNKEEHPEPIKAEVQGQLPTWLQGVLLRNGPGMHTIGDTKYNHWFDGLALLHSFTFKNGEVYYRSKYLRSDTYNCNIEANRIVVSEFGTMAYPDPCKNIFAKAFSYLSHTIPEFTDNCLINIMKTGDDYYATSETNFIRKIDPQTLETLDKVDYSKYVAVNLATSHPHYDSAGNILNMGTSIVDKGRTKYVLFKIPSSVPEKEKKKSCFKHLEVVCSIPSRSLLQPSYYHSFGITENYIVFIEQPFKLDIVKLATAYIRGVNWASCLSFHKEDKTWFHFVDRKTKKEVSTKFYTDALVLYHHINAYEEDGHVVFDIVAYRDNSLYDMFYLKKLDKDFEVNNKLTSIPTCKRFVVPLQYDKDAEVGSNLVKLPTSATAVKEKDGSIYCQPEILCEGIELPRVNYDYNGKKYKYVYATEVQWSPVPTKIAKLNVQTKEVLHWGEDHCWPSEPIFVPSPDAREEDEGVVLTCVVVSEPNKAPFLLILDAKTFKELGRATVNVEMHLDLHGMFIPQNDLGAETE.

4 residues coordinate Fe cation: His-172, His-236, His-307, and His-512.

It belongs to the carotenoid oxygenase family. Fe(2+) serves as cofactor.

The protein localises to the cytoplasm. It localises to the cytosol. The catalysed reaction is all-trans-beta-carotene + O2 = 2 all-trans-retinal. The protein operates within cofactor metabolism; retinol metabolism. Functionally, symmetrically cleaves beta-carotene into two molecules of retinal using a dioxygenase mechanism. This is Beta,beta-carotene 15,15'-dioxygenase from Gallus gallus (Chicken).